A 120-amino-acid chain; its full sequence is GATA transcription factor 23 (120 aa).

The GATA-type zinc finger occupies 22-76 (KGTIRCCSECKTTKTPMWRGGPTGPKSLCNACGIRHRKQRRSELLGIHIIRSHKS).

The protein belongs to the type IV zinc-finger family. Class B subfamily.

It localises to the nucleus. Functionally, transcriptional regulator that specifically binds 5'-GATA-3' or 5'-GAT-3' motifs within gene promoters. This Arabidopsis thaliana (Mouse-ear cress) protein is GATA transcription factor 23 (GATA23).